The primary structure comprises 173 residues: HAM34 protein (173 aa).

Residues 22-89 (AAPATTPDTA…ADGTQTATAP (68 aa)) show a composition bias toward low complexity. The segment at 22–155 (AAPATTPDTA…ATDTTSGASH (134 aa)) is disordered. Positions 95–133 (TEESSASGEMTPTVGTDTSDQVSDSTAAGPSTPEGSMTG) are enriched in polar residues. The span at 134 to 155 (TSTPKASDSSSSATDTTSGASH) shows a compositional bias: low complexity.

Germinating spores.

Could be a structural protein required for the infection process of B.lactucae. The chain is HAM34 protein (HAM34) from Bremia lactucae (Lettuce downy mildew).